Consider the following 285-residue polypeptide: Golgi phosphoprotein 3-like (285 aa).

The interval 1–39 (MTTLTHRARRTEVGKNSEKKVESEENVNQDRNQDNEDIG) is disordered. The segment covering 10–23 (RTEVGKNSEKKVES) has biased composition (basic and acidic residues). A 1,2-diacyl-sn-glycero-3-phospho-(1D-myo-inositol 4-phosphate) is bound by residues W67 and R76. At S112 the chain carries Phosphoserine. Residues R157 and R160 each coordinate a 1,2-diacyl-sn-glycero-3-phospho-(1D-myo-inositol 4-phosphate). Positions 176–187 (EKQNFLLFDMTT) are beta-hairpin required for oligomerization.

The protein belongs to the GOLPH3/VPS74 family. As to quaternary structure, homooligomer. Does not interact MYO18; differs from GOLPH3 by its inability to interact with MYO18. May interact with ARF1.

The protein localises to the golgi apparatus. Its subcellular location is the golgi stack membrane. The protein resides in the trans-Golgi network membrane. Its function is as follows. Phosphatidylinositol-4-phosphate-binding protein that may antagonize the action of GOLPH3 which is required for the process of vesicle budding at the Golgi and anterograde transport to the plasma membrane. This Bos taurus (Bovine) protein is Golgi phosphoprotein 3-like (GOLPH3L).